We begin with the raw amino-acid sequence, 179 residues long: Large ribosomal subunit protein uL6 (179 aa).

The protein belongs to the universal ribosomal protein uL6 family. In terms of assembly, part of the 50S ribosomal subunit.

Its function is as follows. This protein binds to the 23S rRNA, and is important in its secondary structure. It is located near the subunit interface in the base of the L7/L12 stalk, and near the tRNA binding site of the peptidyltransferase center. The polypeptide is Large ribosomal subunit protein uL6 (Bifidobacterium animalis subsp. lactis (strain AD011)).